The following is a 428-amino-acid chain: Phosphomethylpyrimidine synthase 2 (428 aa).

Substrate-binding positions include N65, M94, Y123, H158, 180-182, 221-224, and E260; these read SRG and DGMR. H264 lines the Zn(2+) pocket. Residue Y287 coordinates substrate. H328 is a Zn(2+) binding site. Residues C405, C408, and C412 each contribute to the [4Fe-4S] cluster site.

This sequence belongs to the ThiC family. [4Fe-4S] cluster is required as a cofactor.

The catalysed reaction is 5-amino-1-(5-phospho-beta-D-ribosyl)imidazole + S-adenosyl-L-methionine = 4-amino-2-methyl-5-(phosphooxymethyl)pyrimidine + CO + 5'-deoxyadenosine + formate + L-methionine + 3 H(+). The protein operates within cofactor biosynthesis; thiamine diphosphate biosynthesis. Its function is as follows. Catalyzes the synthesis of the hydroxymethylpyrimidine phosphate (HMP-P) moiety of thiamine from aminoimidazole ribotide (AIR) in a radical S-adenosyl-L-methionine (SAM)-dependent reaction. The protein is Phosphomethylpyrimidine synthase 2 of Methanosarcina barkeri (strain Fusaro / DSM 804).